The sequence spans 62 residues: Small ribosomal subunit protein eS27 (62 aa).

Zn(2+) is bound by residues Cys-17, Cys-20, Cys-36, and Cys-39. A C4-type zinc finger spans residues 17-39; that stretch reads CNDCENEQIIFGSASRKITCVVC.

It belongs to the eukaryotic ribosomal protein eS27 family. Part of the 30S ribosomal subunit. Requires Zn(2+) as cofactor.

The protein is Small ribosomal subunit protein eS27 of Methanosarcina barkeri (strain Fusaro / DSM 804).